The sequence spans 908 residues: Transcriptional repressor ILP1 (908 aa).

2 disordered regions span residues 1–113 (MGSN…PQAG) and 238–277 (VGPR…EEDK). Residues 25-47 (ATPSSKPTSTLSSSKPKTLSASA) are compositionally biased toward low complexity. The stretch at 426–453 (MQNKGSLIEEIEDQMKELNEKHALSILE) forms a coiled coil. Over residues 513 to 530 (EFGRDENLQKRREVEQRA) the composition is skewed to basic and acidic residues. Residues 513–574 (EFGRDENLQK…ESDTETSAYK (62 aa)) are disordered.

Belongs to the GCF family. In terms of assembly, interacts with STIPL1/NTR1.

The protein resides in the nucleus. Its function is as follows. Transcriptional repressor regulating endoreduplication through control of A-type cyclins expression. Does not bind to promoter sequences (in vitro) and may act by interacting with tissue-specific transcription factors. Enhances the endocycle in endoreduplicating cells in seedlings. Required for efficient splicing. This chain is Transcriptional repressor ILP1, found in Arabidopsis thaliana (Mouse-ear cress).